We begin with the raw amino-acid sequence, 550 residues long: Glucose-6-phosphate isomerase (550 aa).

D-glucose 6-phosphate is bound by residues 164–165 (GS), 215–220 (SKTFTT), Gln-359, Glu-363, and His-394. Residue Glu-363 is the Proton donor of the active site. The active site involves His-394. Thr-455 is modified (phosphothreonine). Lys-516 is a binding site for D-glucose 6-phosphate. Residue Lys-516 is part of the active site.

This sequence belongs to the GPI family. As to quaternary structure, homodimer.

Its subcellular location is the cytoplasm. It is found in the cytosol. It carries out the reaction alpha-D-glucose 6-phosphate = beta-D-fructose 6-phosphate. The protein operates within carbohydrate degradation; glycolysis; D-glyceraldehyde 3-phosphate and glycerone phosphate from D-glucose: step 2/4. Its function is as follows. In the cytoplasm, catalyzes the conversion of glucose-6-phosphate to fructose-6-phosphate, the second step in glycolysis, and the reverse reaction during gluconeogenesis. The protein is Glucose-6-phosphate isomerase (pgi1) of Schizosaccharomyces pombe (strain 972 / ATCC 24843) (Fission yeast).